Reading from the N-terminus, the 190-residue chain is Carbonic anhydrase 2 (190 aa).

The protein belongs to the beta-class carbonic anhydrase family. In terms of assembly, homohexamer.

The protein localises to the cytoplasm. The catalysed reaction is hydrogencarbonate + H(+) = CO2 + H2O. Functionally, reversible hydration of carbon dioxide. This is Carbonic anhydrase 2 from Flaveria linearis (Narrowleaf yellowtops).